The following is a 144-amino-acid chain: Large ribosomal subunit protein uL15 (144 aa).

The segment at 1–53 (MRLNTLSPAQGAKQAPKRVGRGIGSGLGKTGGRGHKGQNSRTGGGVRRGFEGG) is disordered. Residues 21–31 (RGIGSGLGKTG) show a composition bias toward gly residues.

Belongs to the universal ribosomal protein uL15 family. In terms of assembly, part of the 50S ribosomal subunit.

Binds to the 23S rRNA. This is Large ribosomal subunit protein uL15 from Hamiltonella defensa subsp. Acyrthosiphon pisum (strain 5AT).